Here is a 76-residue protein sequence, read N- to C-terminus: Putative defensin-like protein 184 (76 aa).

The first 21 residues, 1–21 (MKNSSILFVLIIVVFLISSSG), serve as a signal peptide directing secretion. Disulfide bonds link cysteine 32–cysteine 76, cysteine 38–cysteine 58, cysteine 44–cysteine 70, and cysteine 48–cysteine 72.

The protein belongs to the DEFL family.

It localises to the secreted. The chain is Putative defensin-like protein 184 (LCR18) from Arabidopsis thaliana (Mouse-ear cress).